A 90-amino-acid chain; its full sequence is WAP four-disulfide core domain protein 12 (90 aa).

Positions 1–23 (MGSSSFLVLMVSLALVTLVAVEG) are cleaved as a signal peptide. The WAP domain maps to 27-74 (GIEKAGVCPADNVRCFKSDPPQCHTDQDCLGERKCCYLHCGFKCVIPV). 4 disulfides stabilise this stretch: Cys34–Cys62, Cys41–Cys66, Cys49–Cys61, and Cys55–Cys70.

It is found in the secreted. Functionally, antibacterial protein. Putative acid-stable proteinase inhibitor. In Pongo abelii (Sumatran orangutan), this protein is WAP four-disulfide core domain protein 12 (WFDC12).